A 197-amino-acid chain; its full sequence is NAD(P)H-quinone oxidoreductase subunit 6, chloroplastic (197 aa).

A run of 5 helical transmembrane segments spans residues 10-30 (FVLA…VLLV), 39-59 (LGLV…DFVA), 60-80 (AAQL…AVMI), 94-114 (IGYI…SFVI), and 147-167 (LLGE…AALV).

Belongs to the complex I subunit 6 family. In terms of assembly, NDH is composed of at least 16 different subunits, 5 of which are encoded in the nucleus.

It localises to the plastid. The protein localises to the chloroplast thylakoid membrane. It catalyses the reaction a plastoquinone + NADH + (n+1) H(+)(in) = a plastoquinol + NAD(+) + n H(+)(out). The enzyme catalyses a plastoquinone + NADPH + (n+1) H(+)(in) = a plastoquinol + NADP(+) + n H(+)(out). Functionally, NDH shuttles electrons from NAD(P)H:plastoquinone, via FMN and iron-sulfur (Fe-S) centers, to quinones in the photosynthetic chain and possibly in a chloroplast respiratory chain. The immediate electron acceptor for the enzyme in this species is believed to be plastoquinone. Couples the redox reaction to proton translocation, and thus conserves the redox energy in a proton gradient. The sequence is that of NAD(P)H-quinone oxidoreductase subunit 6, chloroplastic (ndhG) from Adiantum capillus-veneris (Maidenhair fern).